The primary structure comprises 204 residues: Holliday junction branch migration complex subunit RuvA (204 aa).

Residues 1–64 (MIGRLRGILL…EDAQLLYGFN (64 aa)) form a domain I region. The segment at 65–143 (TVKERALFRE…GWGAGDLFTP (79 aa)) is domain II. A flexible linker region spans residues 144–155 (FTDAAPTDSAAA). The interval 156 to 204 (SSNSAEEEAVSALLALGYKPTQASKVVSQIAKPDMSSEQLIREALKSMV) is domain III.

This sequence belongs to the RuvA family. Homotetramer. Forms an RuvA(8)-RuvB(12)-Holliday junction (HJ) complex. HJ DNA is sandwiched between 2 RuvA tetramers; dsDNA enters through RuvA and exits via RuvB. An RuvB hexamer assembles on each DNA strand where it exits the tetramer. Each RuvB hexamer is contacted by two RuvA subunits (via domain III) on 2 adjacent RuvB subunits; this complex drives branch migration. In the full resolvosome a probable DNA-RuvA(4)-RuvB(12)-RuvC(2) complex forms which resolves the HJ.

Its subcellular location is the cytoplasm. The RuvA-RuvB-RuvC complex processes Holliday junction (HJ) DNA during genetic recombination and DNA repair, while the RuvA-RuvB complex plays an important role in the rescue of blocked DNA replication forks via replication fork reversal (RFR). RuvA specifically binds to HJ cruciform DNA, conferring on it an open structure. The RuvB hexamer acts as an ATP-dependent pump, pulling dsDNA into and through the RuvAB complex. HJ branch migration allows RuvC to scan DNA until it finds its consensus sequence, where it cleaves and resolves the cruciform DNA. This chain is Holliday junction branch migration complex subunit RuvA, found in Vibrio parahaemolyticus serotype O3:K6 (strain RIMD 2210633).